The chain runs to 218 residues: uncharacterized protein (218 aa).

The Response regulatory domain maps to 7-123; it reads RVALADDQPL…ELIDAIRAAA (117 aa). Residue Asp-58 is modified to 4-aspartylphosphate. Residues 150–215 form the HTH luxR-type domain; it reads AEELAEPFTK…QAVVFAIRNG (66 aa). Residues 174-193 constitute a DNA-binding region (H-T-H motif); it reads NEDIAEKLFVSESTVKTHVH.

Phosphorylated by YxjM.

The protein localises to the cytoplasm. Functionally, probable member of the two-component regulatory system YxjM/YxjL. This is an uncharacterized protein from Bacillus subtilis (strain 168).